The chain runs to 510 residues: Probable sphingolipid transporter spinster homolog 3 (510 aa).

The chain crosses the membrane as a helical span at residues 44–64 (SSLSPVWLLVIFCIINLLNYM). Asn75 and Asn98 each carry an N-linked (GlcNAc...) asparagine glycan. The next 11 helical transmembrane spans lie at 106 to 126 (VLSSSFMVGLLIASPIFASLA), 136 to 156 (VWTIAVLGCGSSFAFWFIVLC), 158 to 178 (MFVGVGEASFISLAAPFIDDN), 185 to 205 (AAWLGLFYMCIPSGVALGYVY), 219 to 239 (FWGEAVLMAPFAVLGFLMKPL), 298 to 318 (VFVVNVLGYVSYNFVIGAYSY), 336 to 356 (IFGAVTIICGIVGTLSGGFIL), 369 to 387 (LLSGATFLGAVFCFTAFTL), 392 to 414 (GFIALFALGELLVFATQAPVNYV), 430 to 450 (ISTVAIHIFGDVPSSPLVGIV), and 462 to 482 (LILTSILFLAAAIWFIGKINL).

The protein belongs to the major facilitator superfamily. Spinster (TC 2.A.1.49) family.

It localises to the mitochondrion inner membrane. Its function is as follows. Probable sphingolipid transporter. The protein is Probable sphingolipid transporter spinster homolog 3 of Arabidopsis thaliana (Mouse-ear cress).